Here is a 263-residue protein sequence, read N- to C-terminus: MKNAFKDALKAGRPQIGLWLGLANSYSAELLAGAGFDWLLIDGEHAPNNVQTVLTQLQAIASYPSQPVVRPSWNDPVQIKQLLDVGAQTLLIPMVQNADEARNAVAATRYPPAGIRGVGSALARASRWNRIPDYLHQANDAMCVLVQIETREAMSNLASILDVDGIDGVFIGPADLSADMGFAGNPQHPEVQAAIENAIVQIRAAGKAPGILMANEALAKRYLELGALFVAVGVDTTLLARGAEALAARFGAEKNLSGASGVY.

His45 serves as the catalytic Proton acceptor. Substrate is bound at residue Gln147. An a divalent metal cation-binding site is contributed by Glu149. Substrate is bound by residues Ala174 and Asp175. A divalent metal cation is bound at residue Asp175.

This sequence belongs to the HpcH/HpaI aldolase family. As to quaternary structure, homohexamer; trimer of dimers. The cofactor is a divalent metal cation.

It catalyses the reaction 4-hydroxy-2-oxoheptanedioate = succinate semialdehyde + pyruvate. Its pathway is aromatic compound metabolism; 4-hydroxyphenylacetate degradation; pyruvate and succinate semialdehyde from 4-hydroxyphenylacetate: step 7/7. Catalyzes the reversible retro-aldol cleavage of 4-hydroxy-2-ketoheptane-1,7-dioate (HKHD) to pyruvate and succinic semialdehyde. In Salmonella dublin (strain CT_02021853), this protein is 4-hydroxy-2-oxo-heptane-1,7-dioate aldolase.